The following is a 112-amino-acid chain: Large ribosomal subunit protein eL30x (112 aa).

The protein belongs to the eukaryotic ribosomal protein eL30 family.

The protein is Large ribosomal subunit protein eL30x (RPL30C) of Arabidopsis thaliana (Mouse-ear cress).